A 295-amino-acid polypeptide reads, in one-letter code: UDP-N-acetylenolpyruvoylglucosamine reductase (295 aa).

The FAD-binding PCMH-type domain maps to 23 to 188 (KVGGPADFLA…ISAKFALKPG (166 aa)). R167 is a catalytic residue. S217 functions as the Proton donor in the catalytic mechanism. E287 is a catalytic residue.

This sequence belongs to the MurB family. FAD is required as a cofactor.

The protein localises to the cytoplasm. It catalyses the reaction UDP-N-acetyl-alpha-D-muramate + NADP(+) = UDP-N-acetyl-3-O-(1-carboxyvinyl)-alpha-D-glucosamine + NADPH + H(+). Its pathway is cell wall biogenesis; peptidoglycan biosynthesis. Its function is as follows. Cell wall formation. This Streptococcus pyogenes serotype M3 (strain ATCC BAA-595 / MGAS315) protein is UDP-N-acetylenolpyruvoylglucosamine reductase.